We begin with the raw amino-acid sequence, 429 residues long: Histidine--tRNA ligase (429 aa).

This sequence belongs to the class-II aminoacyl-tRNA synthetase family. Homodimer.

Its subcellular location is the cytoplasm. It carries out the reaction tRNA(His) + L-histidine + ATP = L-histidyl-tRNA(His) + AMP + diphosphate + H(+). This is Histidine--tRNA ligase from Pseudomonas fluorescens (strain Pf0-1).